A 78-amino-acid polypeptide reads, in one-letter code: Acyl carrier protein (78 aa).

The Carrier domain maps to 1–75 (MIKEKILSIV…DLISVVKNST (75 aa)). Ser-35 carries the post-translational modification O-(pantetheine 4'-phosphoryl)serine.

This sequence belongs to the acyl carrier protein (ACP) family. Post-translationally, 4'-phosphopantetheine is transferred from CoA to a specific serine of apo-ACP by AcpS. This modification is essential for activity because fatty acids are bound in thioester linkage to the sulfhydryl of the prosthetic group.

The protein resides in the cytoplasm. It participates in lipid metabolism; fatty acid biosynthesis. Carrier of the growing fatty acid chain in fatty acid biosynthesis. This chain is Acyl carrier protein (acpP), found in Shigella flexneri.